Consider the following 2193-residue polypeptide: Genome polyprotein (2193 aa).

The disordered stretch occupies residues 1–23 (MGSQVSTQRSGSHENSNSASEGS). Residue Gly-2 is the site of N-myristoyl glycine; by host attachment. The Cytoplasmic segment spans residues 2–1503 (GSQVSTQRSG…HLNRAVLVMQ (1502 aa)). The interval 566-588 (GDPIADMIDQTVNNQVNRSLTAL) is amphipathic alpha-helix. Residues His-883 and Asp-901 each act as for protease 2A activity in the active site. The Zn(2+) site is built by Cys-918 and Cys-920. Cys-972 serves as the catalytic For protease 2A activity. 2 residues coordinate Zn(2+): Cys-978 and His-980. The segment at 1112 to 1184 (SASWLKKFND…EQSAASQEDL (73 aa)) is membrane-binding. An oligomerization region spans residues 1112 to 1250 (SASWLKKFND…SPGTGKSLAT (139 aa)). The tract at residues 1133-1137 (SSKIS) is RNA-binding. Positions 1216–1374 (EKRMNNYMQF…YKTDLGRLDA (159 aa)) constitute an SF3 helicase domain. Position 1240-1247 (1240-1247 (GSPGTGKS)) interacts with ATP. Positions 1381, 1392, and 1397 each coordinate Zn(2+). The C4-type; degenerate zinc finger occupies 1381–1397 (CTENNTANFKRCSPLVC). Residues 1424–1431 (EYNNRSAI) form an RNA-binding region. Residues 1435–1440 (IEALFQ) form an oligomerization region. Residues 1504-1519 (SIATVVAVVSLVYVIY) lie within the membrane without spanning it. Topologically, residues 1520 to 2193 (KLFAGFQGAY…NLRRNWLELF (674 aa)) are cytoplasmic. Tyr-1529 carries the post-translational modification O-(5'-phospho-RNA)-tyrosine. In terms of domain architecture, Peptidase C3 spans 1549 to 1727 (GPSLDFALSL…FCAGLKRGYF (179 aa)). Active-site for protease 3C activity residues include His-1588, Glu-1619, and Cys-1695. The 117-residue stretch at 1958 to 2074 (GSLFAFDYSG…SYPFPIDCSE (117 aa)) folds into the RdRp catalytic domain. Mg(2+) contacts are provided by Asp-1964 and Asp-2060.

Belongs to the picornaviruses polyprotein family. As to quaternary structure, interacts with capsid protein VP1 and capsid protein VP3 to form heterotrimeric protomers. Interacts with capsid protein VP0, and capsid protein VP3 to form heterotrimeric protomers. Five protomers subsequently associate to form pentamers which serve as building blocks for the capsid. Interacts with capsid protein VP2, capsid protein VP3 and capsid protein VP4 following cleavage of capsid protein VP0. In terms of assembly, interacts with capsid protein VP1 and capsid protein VP3 in the mature capsid. As to quaternary structure, interacts with capsid protein VP0 and capsid protein VP1 to form heterotrimeric protomers. Five protomers subsequently associate to form pentamers which serve as building blocks for the capsid. Interacts with capsid protein VP4 in the mature capsid. Interacts with protein 2C; this interaction may be important for virion morphogenesis. Interacts with capsid protein VP1 and capsid protein VP3. In terms of assembly, homodimer. As to quaternary structure, homohexamer; forms a hexameric ring structure with 6-fold symmetry characteristic of AAA+ ATPases. Interacts (via N-terminus) with host RTN3 (via reticulon domain); this interaction is important for viral replication. Interacts with capsid protein VP3; this interaction may be important for virion morphogenesis. Interacts with protein 3CD. In terms of assembly, homodimer. Interacts with host GBF1. Interacts (via GOLD domain) with host ACBD3 (via GOLD domain); this interaction allows the formation of a viral protein 3A/ACBD3 heterotetramer with a 2:2 stoichiometry, which will stimulate the recruitment of host PI4KB in order to synthesize PI4P at the viral RNA replication sites. As to quaternary structure, interacts with RNA-directed RNA polymerase. Interacts with host IFIH1/MDA5; this interaction inhibits host IFIH1. In terms of assembly, protein 3CD: Interacts with protein 3AB and with RNA-directed RNA polymerase. As to quaternary structure, interacts with Viral protein genome-linked and with protein 3CD. Requires Mg(2+) as cofactor. In terms of processing, specific enzymatic cleavages in vivo by the viral proteases yield processing intermediates and the mature proteins. Post-translationally, myristoylation is required for the formation of pentamers during virus assembly. Further assembly of 12 pentamers and a molecule of genomic RNA generates the provirion. During virion maturation, immature virions are rendered infectious following cleavage of VP0 into VP4 and VP2. This maturation seems to be an autocatalytic event triggered by the presence of RNA in the capsid and it is followed by a conformational change infectious virion. In terms of processing, myristoylation is required during RNA encapsidation and formation of the mature virus particle. Post-translationally, VPg is uridylylated by the polymerase into VPg-pUpU. This acts as a nucleotide-peptide primer for the genomic RNA replication.

It localises to the virion. It is found in the host cytoplasm. Its subcellular location is the host cytoplasmic vesicle membrane. The protein resides in the host nucleus. It carries out the reaction a ribonucleoside 5'-triphosphate + H2O = a ribonucleoside 5'-diphosphate + phosphate + H(+). The enzyme catalyses Selective cleavage of Tyr-|-Gly bond in the picornavirus polyprotein.. It catalyses the reaction RNA(n) + a ribonucleoside 5'-triphosphate = RNA(n+1) + diphosphate. The catalysed reaction is Selective cleavage of Gln-|-Gly bond in the poliovirus polyprotein. In other picornavirus reactions Glu may be substituted for Gln, and Ser or Thr for Gly.. Replication or transcription is subject to high level of random mutations by the nucleotide analog ribavirin. Its function is as follows. Forms an icosahedral capsid of pseudo T=3 symmetry with capsid proteins VP2 and VP3. The capsid is 300 Angstroms in diameter, composed of 60 copies of each capsid protein and enclosing the viral positive strand RNA genome. Capsid protein VP1 mainly forms the vertices of the capsid. Capsid protein VP1 interacts with host cell receptor to provide virion attachment to target host cells. This attachment induces virion internalization. After binding to its receptor, the capsid undergoes conformational changes. Capsid protein VP1 N-terminus (that contains an amphipathic alpha-helix) and capsid protein VP4 are externalized. Together, they shape a pore in the host membrane through which viral genome is translocated to host cell cytoplasm. In terms of biological role, forms an icosahedral capsid of pseudo T=3 symmetry with capsid proteins VP2 and VP3. The capsid is 300 Angstroms in diameter, composed of 60 copies of each capsid protein and enclosing the viral positive strand RNA genome. Functionally, lies on the inner surface of the capsid shell. After binding to the host receptor, the capsid undergoes conformational changes. Capsid protein VP4 is released, Capsid protein VP1 N-terminus is externalized, and together, they shape a pore in the host membrane through which the viral genome is translocated into the host cell cytoplasm. Component of immature procapsids, which is cleaved into capsid proteins VP4 and VP2 after maturation. Allows the capsid to remain inactive before the maturation step. Its function is as follows. Cysteine protease that cleaves viral polyprotein and specific host proteins. It is responsible for the autocatalytic cleavage between the P1 and P2 regions, which is the first cleavage occurring in the polyprotein. Also cleaves the host translation initiation factor EIF4G1, in order to shut down the capped cellular mRNA translation. Inhibits the host nucleus-cytoplasm protein and RNA trafficking by cleaving host members of the nuclear pores. Counteracts stress granule formation probably by antagonizing its assembly or promoting its dissassembly. Cleaves and inhibits host IFIH1/MDA5, thereby inhibiting the type-I IFN production and the establishment of the antiviral state. Cleaves and inhibits host MAVS, thereby inhibiting the type-I IFN production and the establishment of the antiviral state. In terms of biological role, plays an essential role in the virus replication cycle by acting as a viroporin. Creates a pore in the host endoplasmic reticulum and as a consequence releases Ca2+ in the cytoplasm of infected cell. In turn, high levels of cytoplasmic calcium may trigger membrane trafficking and transport of viral ER-associated proteins to viroplasms, sites of viral genome replication. Functionally, induces and associates with structural rearrangements of intracellular membranes. Displays RNA-binding, nucleotide binding and NTPase activities. May play a role in virion morphogenesis and viral RNA encapsidation by interacting with the capsid protein VP3. Localizes the viral replication complex to the surface of membranous vesicles. Together with protein 3CD binds the Cis-Active RNA Element (CRE) which is involved in RNA synthesis initiation. Acts as a cofactor to stimulate the activity of 3D polymerase, maybe through a nucleid acid chaperone activity. Its function is as follows. Localizes the viral replication complex to the surface of membranous vesicles. It inhibits host cell endoplasmic reticulum-to-Golgi apparatus transport and causes the disassembly of the Golgi complex, possibly through GBF1 interaction. This would result in depletion of MHC, trail receptors and IFN receptors at the host cell surface. Plays an essential role in viral RNA replication by recruiting ACBD3 and PI4KB at the viral replication sites, thereby allowing the formation of the rearranged membranous structures where viral replication takes place. In terms of biological role, acts as a primer for viral RNA replication and remains covalently bound to viral genomic RNA. VPg is uridylylated prior to priming replication into VPg-pUpU. The oriI viral genomic sequence may act as a template for this. The VPg-pUpU is then used as primer on the genomic RNA poly(A) by the RNA-dependent RNA polymerase to replicate the viral genome. During genome replication, the VPg-RNA linkage is removed by the host TDP2, thereby accelerating replication. During the late stage of the replication cycle, host TDP2 is excluded from sites of viral RNA synthesis and encapsidation, allowing for the generation of progeny virions. Functionally, involved in the viral replication complex and viral polypeptide maturation. It exhibits protease activity with a specificity and catalytic efficiency that is different from protease 3C. Protein 3CD lacks polymerase activity. Protein 3CD binds to the 5'UTR of the viral genome. Major viral protease that mediates proteolytic processing of the polyprotein. Cleaves host EIF5B, contributing to host translation shutoff. Also cleaves host PABPC1, contributing to host translation shutoff. Binds and inhibits host IFIH1/MDA5, thereby inhibiting the type-I IFN production and the establishment of the antiviral state. Cleaves host MAP3K7/TAK1, resulting in inhibition of TRAF6-triggered NF-kappa-B induction. Cleaves host NLRP1, triggers host N-glycine-mediated degradation of the autoinhibitory NLRP1 N-terminal fragment. Its function is as follows. Replicates the viral genomic RNA on the surface of intracellular membranes. May form linear arrays of subunits that propagate along a strong head-to-tail interaction called interface-I. Covalently attaches UMP to a tyrosine of VPg, which is used to prime RNA synthesis. The positive stranded RNA genome is first replicated at virus induced membranous vesicles, creating a dsRNA genomic replication form. This dsRNA is then used as template to synthesize positive stranded RNA genomes. ss(+)RNA genomes are either translated, replicated or encapsidated. This is Genome polyprotein from Homo sapiens (Human).